Consider the following 853-residue polypeptide: DNA (cytosine-5)-methyltransferase 3B (853 aa).

A compositionally biased stretch (basic and acidic residues) spans 1-20 (MKGDTRHLNGEEDAGGREDS). The tract at residues 1 to 218 (MKGDTRHLNG…SGDGDSSEYQ (218 aa)) is disordered. Residues 1 to 298 (MKGDTRHLNG…LATFNKLVSY (298 aa)) are interaction with DNMT1 and DNMT3A. The segment covering 72–81 (GDGDGEDGDG) has biased composition (acidic residues). Residue Ser-82 is modified to Phosphoserine. Residue Lys-89 forms a Glycyl lysine isopeptide (Lys-Gly) (interchain with G-Cter in SUMO2) linkage. Position 96 is a phosphothreonine (Thr-96). Ser-100 and Ser-110 each carry phosphoserine. Over residues 115-130 (ERHRPSPRSTRGRQGR) the composition is skewed to basic residues. A phosphoserine mark is found at Ser-136, Ser-195, Ser-202, and Ser-209. The segment covering 179-199 (GTPQSSSTPYARLAQDSQQGG) has biased composition (polar residues). The PWWP domain occupies 225–283 (IGDLVWGKIKGFSWWPAMVVSWKATSKRQAMSGMRWVQWFGDGKFSEVSADKLVALGLF). A disordered region spans residues 341–423 (KPTGIEGLKP…DQSREQMASD (83 aa)). 2 stretches are compositionally biased toward basic and acidic residues: residues 368 to 385 (RKLE…RTAD) and 407 to 417 (GKDRGDEDQSR). Citrulline is present on Arg-410. Residues 423 to 555 (DVANNKSSLE…LQAFFTSDTG (133 aa)) enclose the ADD domain. The segment at 434-464 (GCLSCGRKNPVSFHPLFEGGLCQTCRDRFLE) adopts a GATA-type; atypical zinc-finger fold. The segment at 435–527 (CLSCGRKNPV…LQEPWSCYMC (93 aa)) is interaction with the PRC2/EED-EZH2 complex. The PHD-type; atypical zinc finger occupies 475–531 (QSYCTVCCEGRELLLCSNTSCCRCFCVECLEVLVGTGTAAEAKLQEPWSCYMCLPQR). An SAM-dependent MTase C5-type domain is found at 575 to 853 (IRVLSLFDGI…APLKDYFACE (279 aa)). S-adenosyl-L-methionine is bound by residues 582–586 (DGIAT) and Glu-605. Lys-617 participates in a covalent cross-link: Glycyl lysine isopeptide (Lys-Gly) (interchain with G-Cter in SUMO2). 627–629 (DVR) lines the S-adenosyl-L-methionine pocket. The active site involves Cys-651. Residue 832 to 834 (RSW) participates in S-adenosyl-L-methionine binding.

Belongs to the class I-like SAM-binding methyltransferase superfamily. C5-methyltransferase family. Interacts with BAZ2A/TIP5, SUV39H1 and CBX4. Interacts with UHRF1. Interacts with DNMT1 and DNMT3A, SETDB1, UBL1, UBE2I9 and ZHX1. Interacts with the PRC2/EED-EZH2 complex. In terms of processing, sumoylated. Citrullinated by PADI4. Ubiquitous; highly expressed in fetal liver, heart, kidney, placenta, and at lower levels in spleen, colon, brain, liver, small intestine, lung, peripheral blood mononuclear cells, and skeletal muscle. Isoform 1 is expressed in all tissues except brain, skeletal muscle and PBMC, 3 is ubiquitous, 4 is expressed in all tissues except brain, skeletal muscle, lung and prostate and 5 is detectable only in testis and at very low level in brain and prostate.

It localises to the nucleus. It catalyses the reaction a 2'-deoxycytidine in DNA + S-adenosyl-L-methionine = a 5-methyl-2'-deoxycytidine in DNA + S-adenosyl-L-homocysteine + H(+). Activated by binding to the regulatory factor DNMT3L. In terms of biological role, required for genome-wide de novo methylation and is essential for the establishment of DNA methylation patterns during development. DNA methylation is coordinated with methylation of histones. May preferentially methylates nucleosomal DNA within the nucleosome core region. May function as transcriptional co-repressor by associating with CBX4 and independently of DNA methylation. Seems to be involved in gene silencing. In association with DNMT1 and via the recruitment of CTCFL/BORIS, involved in activation of BAG1 gene expression by modulating dimethylation of promoter histone H3 at H3K4 and H3K9. Isoforms 4 and 5 are probably not functional due to the deletion of two conserved methyltransferase motifs. Functions as a transcriptional corepressor by associating with ZHX1. Required for DUX4 silencing in somatic cells. The protein is DNA (cytosine-5)-methyltransferase 3B (DNMT3B) of Homo sapiens (Human).